The sequence spans 299 residues: MLDKSRLRIAMQKSGRLSKESQKLLEQCGIKINLQQQQLLAFAENMTIDIMRVRDDDIPGLIMDGVVDLGIIGENVLEEALLTRQSQGDNPCYVTLRRLDFGDCRLSMALPMDKPWNGPKCLQGKRIATSYPHLLKQYLDKLGINFKSCLLNGSVEVAPRAGLADAICDLVSTGATLEANGLREVEVIYRSKACLIQRSGNLSKTKQSLIDKLMIRIQGVIQARESKYIMLHAPAERLEEIINLLPGAESPTVLPLAGNQHRVAIYMVSNEALFWETMENLKNLGASSILVLPIEKMME.

The protein belongs to the ATP phosphoribosyltransferase family. Long subfamily. Equilibrium between an active dimeric form, an inactive hexameric form and higher aggregates. Interconversion between the various forms is largely reversible and is influenced by the natural substrates and inhibitors of the enzyme. It depends on Mg(2+) as a cofactor.

The protein localises to the cytoplasm. The enzyme catalyses 1-(5-phospho-beta-D-ribosyl)-ATP + diphosphate = 5-phospho-alpha-D-ribose 1-diphosphate + ATP. The protein operates within amino-acid biosynthesis; L-histidine biosynthesis; L-histidine from 5-phospho-alpha-D-ribose 1-diphosphate: step 1/9. Its activity is regulated as follows. Feedback inhibited by histidine. In terms of biological role, catalyzes the condensation of ATP and 5-phosphoribose 1-diphosphate to form N'-(5'-phosphoribosyl)-ATP (PR-ATP). Has a crucial role in the pathway because the rate of histidine biosynthesis seems to be controlled primarily by regulation of HisG enzymatic activity. The polypeptide is ATP phosphoribosyltransferase (Blochmanniella floridana).